A 338-amino-acid chain; its full sequence is Aspartate-semialdehyde dehydrogenase (338 aa).

NADP(+) contacts are provided by residues 9-12 (TGQV) and 37-38 (RS). Arginine 93 provides a ligand contact to phosphate. The Acyl-thioester intermediate role is filled by cysteine 123. Position 150 (glutamine 150) interacts with substrate. NADP(+) is bound at residue 153 to 154 (SG). Lysine 220 provides a ligand contact to phosphate. Residue arginine 242 participates in substrate binding. Histidine 249 serves as the catalytic Proton acceptor. Residue asparagine 316 participates in NADP(+) binding.

It belongs to the aspartate-semialdehyde dehydrogenase family. As to quaternary structure, homodimer.

The enzyme catalyses L-aspartate 4-semialdehyde + phosphate + NADP(+) = 4-phospho-L-aspartate + NADPH + H(+). It functions in the pathway amino-acid biosynthesis; L-lysine biosynthesis via DAP pathway; (S)-tetrahydrodipicolinate from L-aspartate: step 2/4. The protein operates within amino-acid biosynthesis; L-methionine biosynthesis via de novo pathway; L-homoserine from L-aspartate: step 2/3. Its pathway is amino-acid biosynthesis; L-threonine biosynthesis; L-threonine from L-aspartate: step 2/5. Functionally, catalyzes the NADPH-dependent formation of L-aspartate-semialdehyde (L-ASA) by the reductive dephosphorylation of L-aspartyl-4-phosphate. This Streptomyces akiyoshiensis protein is Aspartate-semialdehyde dehydrogenase.